Consider the following 346-residue polypeptide: Patr class I histocompatibility antigen, CH28 alpha chain (346 aa).

A signal peptide spans 1-21 (MAPRSLLLLFSGALALTETWA). Positions 22–111 (GSHSLRYFST…LLRRYNQSEA (90 aa)) are alpha-1. Residues 22–305 (GSHSLRYFST…EQSPQPTIPI (284 aa)) lie on the Extracellular side of the membrane. N-linked (GlcNAc...) asparagine glycosylation is present at Asn-107. An alpha-2 region spans residues 112–203 (GSHTLQGMNG…ENGKETLQRA (92 aa)). 2 disulfide bridges follow: Cys-122–Cys-185 and Cys-224–Cys-280. The alpha-3 stretch occupies residues 204-295 (DPPKAHIAHH…GLPQPLTLRW (92 aa)). The 89-residue stretch at 206 to 294 (PKAHIAHHPI…EGLPQPLTLR (89 aa)) folds into the Ig-like C1-type domain. The tract at residues 296–305 (EQSPQPTIPI) is connecting peptide. Residues 306-329 (VGIVAGLVVLGAVVTGAVVAAVMW) traverse the membrane as a helical segment. The Cytoplasmic portion of the chain corresponds to 330-346 (RKKSSDRNRGSYSQAAV).

The protein belongs to the MHC class I family. As to quaternary structure, heterodimer of an alpha chain and a beta chain (beta-2-microglobulin).

Its subcellular location is the membrane. Involved in the presentation of foreign antigens to the immune system. This Pan troglodytes (Chimpanzee) protein is Patr class I histocompatibility antigen, CH28 alpha chain.